A 375-amino-acid polypeptide reads, in one-letter code: Fluoride export protein 1 (375 aa).

Residues 1 to 11 are Cytoplasmic-facing; the sequence is MIFNPVISNHK. A helical membrane pass occupies residues 12-32; that stretch reads LSHYIHVFCTFTTFCILGTET. Residues 33–34 lie on the Extracellular side of the membrane; it reads RQ. Residues 35 to 55 form a helical membrane-spanning segment; the sequence is AITALSTYTPAFVTAPTVLWS. The Cytoplasmic portion of the chain corresponds to 56 to 79; the sequence is NCSSCMLMGIMQSLNAYTWMKDHQ. Residues 80–100 traverse the membrane as a helical segment; it reads VLFLGVTTGYCGALSSFSSML. The Extracellular segment spans residues 101-127; it reads LEMFEHSTNLTNGNIANHTKLPNRAYG. Residues Asn109 and Asn117 are each glycosylated (N-linked (GlcNAc...) asparagine). A helical transmembrane segment spans residues 128 to 148; the sequence is IMEFLSVLLVHLMVSMGSLIF. Residues 149–213 are Cytoplasmic-facing; the sequence is GRQLGKEVIV…FKKFFDIVDK (65 aa). The helical transmembrane segment at 214–234 threads the bilayer; it reads LAYALAFPLIILFVVLCAYYE. A glycan (N-linked (GlcNAc...) asparagine) is linked at Asn235. At 235–241 the chain is on the extracellular side; the sequence is NYSRGKW. The helical transmembrane segment at 242 to 262 threads the bilayer; that stretch reads TLPCLFGIFAGFLRYWLAEMF. Residues 263–268 lie on the Cytoplasmic side of the membrane; it reads NKTNKK. Residues 269–289 form a helical membrane-spanning segment; it reads FPLGTFLANVFATLLIGIFTM. Residues 290–310 are Extracellular-facing; that stretch reads VQRGKKHFSTDVPIVNSLNSC. A helical membrane pass occupies residues 311 to 331; it reads HIVSALISGFCGTLSTISTFI. The Cytoplasmic segment spans residues 332–338; the sequence is NEGYKLS. The helical transmembrane segment at 339–359 threads the bilayer; the sequence is FINMLIYYTVSIAISYCLLVI. The Extracellular segment spans residues 360 to 375; it reads TLGSYAWTRGLTNPIC.

The protein belongs to the fluoride channel Fluc/FEX (TC 1.A.43) family.

It is found in the cell membrane. It catalyses the reaction fluoride(in) = fluoride(out). In terms of biological role, fluoride channel required for the rapid expulsion of cytoplasmic fluoride. The chain is Fluoride export protein 1 from Saccharomyces cerevisiae (strain ATCC 204508 / S288c) (Baker's yeast).